The sequence spans 574 residues: Membralin (574 aa).

Positions 1–27 are disordered; it reads MSEHAAAPGPGPNGGGGGGAAPVRGPR. Ser-2 carries the post-translational modification N-acetylserine. Residues 69-89 traverse the membrane as a helical segment; sequence FFVLLKALFVLFVLAYIHIVF. N-linked (GlcNAc...) asparagine glycosylation is present at Asn-180. 3 consecutive transmembrane segments (helical) span residues 293–313, 337–357, and 417–437; these read TSYL…SMLL, IAFP…MEAI, and YSSL…IYFF. 2 stretches are compositionally biased toward low complexity: residues 461–470 and 491–501; these read LGPGTPTALP and LGPSSSPAPTG. Disordered stretches follow at residues 461-515 and 546-574; these read LGPG…GASV and RRPT…PAGS.

The protein belongs to the membralin family. Interacts with ERLIN2. Detected in brain, spinal cord, lung, liver and kidney.

It localises to the endoplasmic reticulum membrane. In terms of biological role, may have a role in the ERAD pathway required for clearance of misfolded proteins in the endoplasmic reticulum (ER). Promotes survival of motor neurons, probably by protecting against ER stress. The protein is Membralin (Tmem259) of Mus musculus (Mouse).